The following is a 38-amino-acid chain: Mu-agatoxin-Hc1c (38 aa).

Cystine bridges form between cysteine 3/cysteine 19, cysteine 10/cysteine 24, cysteine 18/cysteine 34, and cysteine 26/cysteine 32. Serine 38 is subject to Serine amide.

It belongs to the neurotoxin 07 (Beta/delta-agtx) family. 02 (aga-3) subfamily. In terms of tissue distribution, expressed by the venom gland.

The protein localises to the secreted. Its function is as follows. Insecticidal neurotoxin that induces irreversible neuromuscular blockade in house crickets (A.domesticus). Modifies presynaptic voltage-gated sodium channels (Nav), causing them to open at the normal resting potential of the nerve. This leads to spontaneous release of neurotransmitter and repetitive action potentials in motor neurons. This Hololena curta (Funnel-web spider) protein is Mu-agatoxin-Hc1c.